Consider the following 337-residue polypeptide: Inositol 2-dehydrogenase (337 aa).

The protein belongs to the Gfo/Idh/MocA family. Homotetramer.

It carries out the reaction myo-inositol + NAD(+) = scyllo-inosose + NADH + H(+). Functionally, involved in the oxidation of myo-inositol (MI) to 2-keto-myo-inositol (2KMI or 2-inosose). In Klebsiella pneumoniae (strain 342), this protein is Inositol 2-dehydrogenase.